Reading from the N-terminus, the 526-residue chain is Arginine/ornithine antiporter ArcD1 (526 aa).

Transmembrane regions (helical) follow at residues 8 to 28, 41 to 61, 88 to 108, 128 to 148, 160 to 180, 220 to 240, 255 to 275, 297 to 317, 354 to 374, 378 to 398, 407 to 427, 428 to 448, 466 to 486, and 495 to 515; these read GIGL…GGVF, GGVV…VLSL, FISG…FAVL, LTIL…LLVM, IVLV…IVTF, VKGS…AAMM, IFGL…PFGF, VGGW…LGAW, LLLT…VADA, FVYL…LYLF, TSNI…LYYS, GWQF…LYAL, FILT…WLGL, and NTLL…YFVV.

Belongs to the amino acid-polyamine-organocation (APC) superfamily. Basic amino acid/polyamine antiporter (APA) (TC 2.A.3.2) family.

It is found in the cell membrane. The catalysed reaction is L-ornithine(in) + L-arginine(out) = L-ornithine(out) + L-arginine(in). Functionally, catalyzes electroneutral exchange between L-arginine and L-ornithine. Can also efficiently translocate L-histidine and L-lysine. ArcD1 is the main L-arginine/L-ornithine exchanger in the arginine deiminase (ADI) pathway. In Lactococcus lactis subsp. cremoris (strain MG1363), this protein is Arginine/ornithine antiporter ArcD1.